The primary structure comprises 136 residues: Histone H2A (136 aa).

Over residues 1–11 (MTGGKSAGGKA) the composition is skewed to gly residues. The disordered stretch occupies residues 1-23 (MTGGKSAGGKAGTTKNAQSRSSK). N6-acetyllysine is present on residues lysine 5 and lysine 10. Glutamine 107 is subject to N5-methylglutamine. Phosphoserine is present on serine 133. Residues 133–134 (SQ) carry the [ST]-Q motif motif.

Belongs to the histone H2A family. In terms of assembly, the nucleosome is a histone octamer containing two molecules each of H2A, H2B, H3 and H4 assembled in one H3-H4 heterotetramer and two H2A-H2B heterodimers. The octamer wraps approximately 147 bp of DNA. Phosphorylated to form H2AS128ph (gamma-H2A) in response to DNA double-strand breaks (DSBs) generated by exogenous genotoxic agents and by stalled replication forks. Phosphorylation is dependent on the DNA damage checkpoint kinases MEC1/ATR and TEL1/ATM, spreads on either side of a detected DSB site and may mark the surrounding chromatin for recruitment of proteins required for DNA damage signaling and repair. Gamma-H2A is removed from the DNA prior to the strand invasion-primer extension step of the repair process and subsequently dephosphorylated. Dephosphorylation is necessary for efficient recovery from the DNA damage checkpoint. Post-translationally, acetylated by ESA1 to form H2AK4ac and H2AK7ac.

The protein localises to the nucleus. It localises to the chromosome. In terms of biological role, core component of nucleosome which plays a central role in DNA double strand break (DSB) repair. Nucleosomes wrap and compact DNA into chromatin, limiting DNA accessibility to the cellular machineries which require DNA as a template. Histones thereby play a central role in transcription regulation, DNA repair, DNA replication and chromosomal stability. DNA accessibility is regulated via a complex set of post-translational modifications of histones, also called histone code, and nucleosome remodeling. This is Histone H2A (hta1) from Botryotinia fuckeliana (strain B05.10) (Noble rot fungus).